The following is a 452-amino-acid chain: MFSKFALTGSLLAGAVNAQGVGTQQTETHPQMTWQSCTSPSSCTTNQGEVVIDSNWRWVHDKDGYVNCYTGNTWNTTLCPDDKTCAANCVLDGADYSSTYGITTSGNALSLQFVTQSSGKNIGSRTYLMESSTKYHLFDLIGNEFAFDVDLSKLPCGLNGALYFVTMDADGGMAKYSTNTAGAEYGTGYCDSQCPRDLKFINGQGNVEGWTPSTNDANAGVGGLGSCCSEMDVWEANSMDMAYTPHPCETAAQHSCNADECGGTYSSSRYAGDCDPDGCDWNPFRMGNKDFYGSGDTVDTSQKFTVVTQFHGSGSSLTEISQYYIQGGTKIQQPNSTWPTLTGYNSITDDFCKAQKVEFNDTDVFSEKGGLAQMGAGMADGMVLVMSLWDDHYANMLWLDSTYPVDADASSPGKQRGTCATTSGVPADVESSDASATVIYSNIKFGPIGATY.

Residues 1–18 (MFSKFALTGSLLAGAVNA) form the signal peptide. Residue asparagine 75 is glycosylated (N-linked (GlcNAc...) asparagine). The active-site Nucleophile is the glutamate 230. The active-site Proton donor is the glutamate 235. N-linked (GlcNAc...) asparagine glycosylation is found at asparagine 335 and asparagine 360.

This sequence belongs to the glycosyl hydrolase 7 (cellulase C) family.

It carries out the reaction Hydrolysis of (1-&gt;4)-beta-D-glucosidic linkages in cellulose and cellotetraose, releasing cellobiose from the non-reducing ends of the chains.. In terms of biological role, the biological conversion of cellulose to glucose generally requires three types of hydrolytic enzymes: (1) Endoglucanases which cut internal beta-1,4-glucosidic bonds; (2) Exocellobiohydrolases that cut the disaccharide cellobiose from the non-reducing end of the cellulose polymer chain; (3) Beta-1,4-glucosidases which hydrolyze the cellobiose and other short cello-oligosaccharides to glucose. The sequence is that of Exoglucanase 1 (CBH-1) from Cryphonectria parasitica (Chestnut blight fungus).